Reading from the N-terminus, the 551-residue chain is Cleavage and polyadenylation specificity factor subunit 6 (551 aa).

A necessary for interaction with NXF1 region spans residues Met1–Gly213. An RRM domain is found at Ile81–Lys161. Residues Ile81 to Lys161 are necessary for interaction with NUDT21/CPSF5. Residues Ile81–Lys161 are necessary for nuclear paraspeckles localization. At Thr157 the chain carries Phosphothreonine. Residues Met169–Met180 show a composition bias toward polar residues. 2 disordered regions span residues Met169–Glu411 and Leu477–Arg551. Residues Arg202–Arg206 carry the GAR motif. The segment covering Phe207–Gly219 has biased composition (low complexity). Pro residues-rich tracts occupy residues Pro220–Gly265, Gly285–Thr366, and Gly377–Pro388. The span at Pro389–Thr404 shows a compositional bias: basic and acidic residues. Phosphothreonine is present on residues Thr404 and Thr407. Residues Thr404–Arg551 form a sufficient for nuclear speckle localization region. The interval Ala405 to Arg551 is necessary for RNA-binding. The necessary for interaction with SRSF3, SRSF7 and TRA2B/SFRS10 stretch occupies residues Glu481–Arg551. Residues Ser489–Arg503 show a composition bias toward basic and acidic residues. Positions Arg490 to Arg551 are arg/Ser-rich domain. Phosphoserine is present on residues Ser494, Ser500, Ser511, Ser513, and Ser525. A compositionally biased stretch (basic residues) spans Glu504–Arg514. The tract at residues Lys510–Arg551 is sufficient for nuclear targeting. Over residues Asp515–Arg551 the composition is skewed to basic and acidic residues.

It belongs to the RRM CPSF6/7 family. As to quaternary structure, component of the cleavage factor Im (CFIm) complex which is a heterotetramer composed of two subunits of NUDT21/CPSF5 and two subunits of CPSF6 or CPSF7 or a heterodimer of CPSF6 and CPSF7. The cleavage factor Im (CFIm) complex associates with the CPSF and CSTF complexes to promote the assembly of the core mRNA 3'-processing machinery. Associates with the exon junction complex (EJC). Associates with the 80S ribosome particle. Interacts (via the RRM domain) with NUDT21/CPSF5; this interaction is direct and enhances binding to RNA. Interacts (via Arg/Ser-rich domain) with FIP1L1 (preferentially via unphosphorylated form and Arg/Glu/Asp-rich domain); this interaction mediates, at least in part, the interaction between the CFIm and CPSF complexes and may be inhibited by CPSF6 hyper-phosphorylation. Interacts (via N-terminus) with NXF1; this interaction is direct. Interacts with SRSF3. Interacts with SRSF7. Interacts with SNRNP70. Interacts with TRA2B/SFRS10. Interacts with UPF1. Interacts with UPF3B. Interacts with VIRMA. Interacts (via Arg/Ser-rich domain) with TNPO3; promoting nuclear import of CPSF6 independently of its phosphorylation status. Interacts with YTHDC1. Post-translationally, phosphorylated. Phosphorylated in the Arg/Ser-rich domain by SRPK1, in vitro. Symmetrically dimethylated on arginine residues in the GAR motif by PRMT5 in a WDR77- and CLNS1A-dependent manner. Asymmetrically dimethylated on arginine residues in the GAR motif by PRMT1.

Its subcellular location is the nucleus. The protein resides in the nucleoplasm. It is found in the nucleus speckle. It localises to the cytoplasm. In terms of biological role, component of the cleavage factor Im (CFIm) complex that functions as an activator of the pre-mRNA 3'-end cleavage and polyadenylation processing required for the maturation of pre-mRNA into functional mRNAs. CFIm contributes to the recruitment of multiprotein complexes on specific sequences on the pre-mRNA 3'-end, so called cleavage and polyadenylation signals (pA signals). Most pre-mRNAs contain multiple pA signals, resulting in alternative cleavage and polyadenylation (APA) producing mRNAs with variable 3'-end formation. The CFIm complex acts as a key regulator of cleavage and polyadenylation site choice during APA through its binding to 5'-UGUA-3' elements localized in the 3'-untranslated region (UTR) for a huge number of pre-mRNAs. CPSF6 enhances NUDT21/CPSF5 binding to 5'-UGUA-3' elements localized upstream of pA signals and promotes RNA looping, and hence activates directly the mRNA 3'-processing machinery. Plays a role in mRNA export. This chain is Cleavage and polyadenylation specificity factor subunit 6, found in Bos taurus (Bovine).